The sequence spans 312 residues: Malate dehydrogenase (312 aa).

NAD(+) contacts are provided by residues Gly7–Gly13 and Asp34. Substrate-binding residues include Arg81 and Arg87. NAD(+)-binding positions include Asn94 and Ile117–Asn119. Residues Asn119 and Arg153 each coordinate substrate. Catalysis depends on His177, which acts as the Proton acceptor. Residue Met227 participates in NAD(+) binding.

Belongs to the LDH/MDH superfamily. MDH type 1 family. Homodimer.

The catalysed reaction is (S)-malate + NAD(+) = oxaloacetate + NADH + H(+). Catalyzes the reversible oxidation of malate to oxaloacetate. This is Malate dehydrogenase from Salmonella gallinarum (strain 287/91 / NCTC 13346).